The following is a 223-amino-acid chain: Urease accessory protein UreF (223 aa).

It belongs to the UreF family. As to quaternary structure, ureD, UreF and UreG form a complex that acts as a GTP-hydrolysis-dependent molecular chaperone, activating the urease apoprotein by helping to assemble the nickel containing metallocenter of UreC. The UreE protein probably delivers the nickel.

The protein resides in the cytoplasm. Functionally, required for maturation of urease via the functional incorporation of the urease nickel metallocenter. The chain is Urease accessory protein UreF from Paenarthrobacter aurescens (strain TC1).